The sequence spans 147 residues: Large ribosomal subunit protein uL13 (147 aa).

Belongs to the universal ribosomal protein uL13 family. As to quaternary structure, part of the 50S ribosomal subunit.

Functionally, this protein is one of the early assembly proteins of the 50S ribosomal subunit, although it is not seen to bind rRNA by itself. It is important during the early stages of 50S assembly. The chain is Large ribosomal subunit protein uL13 from Mycobacteroides abscessus (strain ATCC 19977 / DSM 44196 / CCUG 20993 / CIP 104536 / JCM 13569 / NCTC 13031 / TMC 1543 / L948) (Mycobacterium abscessus).